The sequence spans 251 residues: Flap endonuclease Xni (251 aa).

Residue aspartate 104 participates in Mg(2+) binding. In terms of domain architecture, 5'-3' exonuclease spans 160 to 249 (VLPRQLPDYW…IDGNLQQLRL (90 aa)). The K(+) site is built by leucine 171, alanine 172, proline 180, valine 182, and isoleucine 185. Positions 184–189 (GIGPKS) are interaction with DNA.

It belongs to the Xni family. The cofactor is Mg(2+). It depends on K(+) as a cofactor.

In terms of biological role, has flap endonuclease activity. During DNA replication, flap endonucleases cleave the 5'-overhanging flap structure that is generated by displacement synthesis when DNA polymerase encounters the 5'-end of a downstream Okazaki fragment. This is Flap endonuclease Xni from Salmonella typhimurium (strain LT2 / SGSC1412 / ATCC 700720).